A 488-amino-acid chain; its full sequence is Germacrene A hydroxylase (488 aa).

Topologically, residues 1-6 (MEVSLT) are cytoplasmic. A helical; Signal-anchor for type II membrane protein transmembrane segment spans residues 7–23 (TSIALATIVFFLYKLLT). At 24–488 (RPTSSKNRLP…KTELMLVPSF (465 aa)) the chain is on the lumenal side. Asparagine 169, asparagine 260, asparagine 379, and asparagine 412 each carry an N-linked (GlcNAc...) asparagine glycan. Cysteine 432 lines the heme pocket.

It belongs to the cytochrome P450 family. It depends on heme as a cofactor. As to expression, expressed in leaf primordia.

The protein localises to the endoplasmic reticulum membrane. The enzyme catalyses (+)-(R)-germacrene A + 3 reduced [NADPH--hemoprotein reductase] + 3 O2 = germacra-1(10),4,11(13)-trien-12-oate + 3 oxidized [NADPH--hemoprotein reductase] + 4 H2O + 4 H(+). The protein operates within secondary metabolite biosynthesis; terpenoid biosynthesis. Functionally, involved in the biosynthesis of germacrene-derived sesquiterpene lactones. Catalyzes three consecutive oxidations of germacrene A to produce germacrene A acid. Could also catalyze the three-step oxidation of non-natural substrate amorphadiene to artemisinic acid. The sequence is that of Germacrene A hydroxylase from Helianthus annuus (Common sunflower).